A 112-amino-acid chain; its full sequence is Putative pterin-4-alpha-carbinolamine dehydratase (112 aa).

The protein belongs to the pterin-4-alpha-carbinolamine dehydratase family.

The catalysed reaction is (4aS,6R)-4a-hydroxy-L-erythro-5,6,7,8-tetrahydrobiopterin = (6R)-L-erythro-6,7-dihydrobiopterin + H2O. The protein is Putative pterin-4-alpha-carbinolamine dehydratase of Shewanella piezotolerans (strain WP3 / JCM 13877).